The chain runs to 176 residues: NAD(P)H-quinone oxidoreductase subunit 6, chloroplastic (176 aa).

Helical transmembrane passes span 10-30 (FLLVFLGSGLILGGLGVVLLP), 33-53 (IYSAFSLGFVLVCISLFYILL), 61-81 (AQLLIYVGAINVLIIFAVMFM), 92-112 (LWTIGDGVTSVVCTGLFISLI), and 152-172 (FFLPFELVSIILLVALIGAIA).

The protein belongs to the complex I subunit 6 family. As to quaternary structure, NDH is composed of at least 16 different subunits, 5 of which are encoded in the nucleus.

The protein localises to the plastid. Its subcellular location is the chloroplast thylakoid membrane. It carries out the reaction a plastoquinone + NADH + (n+1) H(+)(in) = a plastoquinol + NAD(+) + n H(+)(out). The enzyme catalyses a plastoquinone + NADPH + (n+1) H(+)(in) = a plastoquinol + NADP(+) + n H(+)(out). In terms of biological role, NDH shuttles electrons from NAD(P)H:plastoquinone, via FMN and iron-sulfur (Fe-S) centers, to quinones in the photosynthetic chain and possibly in a chloroplast respiratory chain. The immediate electron acceptor for the enzyme in this species is believed to be plastoquinone. Couples the redox reaction to proton translocation, and thus conserves the redox energy in a proton gradient. The protein is NAD(P)H-quinone oxidoreductase subunit 6, chloroplastic (ndhG) of Coffea arabica (Arabian coffee).